We begin with the raw amino-acid sequence, 449 residues long: 23S rRNA (uracil(1939)-C(5))-methyltransferase RlmD (449 aa).

The region spanning 1-66 (MGRSRYHNKL…AKFDEAKVVE (66 aa)) is the TRAM domain. Positions 79, 85, 88, and 169 each coordinate [4Fe-4S] cluster. Q280, F309, N314, E330, N357, and D379 together coordinate S-adenosyl-L-methionine. C405 (nucleophile) is an active-site residue.

Belongs to the class I-like SAM-binding methyltransferase superfamily. RNA M5U methyltransferase family. RlmD subfamily.

It catalyses the reaction uridine(1939) in 23S rRNA + S-adenosyl-L-methionine = 5-methyluridine(1939) in 23S rRNA + S-adenosyl-L-homocysteine + H(+). Functionally, catalyzes the formation of 5-methyl-uridine at position 1939 (m5U1939) in 23S rRNA. This chain is 23S rRNA (uracil(1939)-C(5))-methyltransferase RlmD, found in Francisella tularensis subsp. holarctica (strain LVS).